A 463-amino-acid polypeptide reads, in one-letter code: L-seryl-tRNA(Sec) selenium transferase (463 aa).

Lys-295 is modified (N6-(pyridoxal phosphate)lysine).

It belongs to the SelA family. Homodecamer; pentamer of dimers. Binds only one seryl-tRNA(Sec) per dimer. Pyridoxal 5'-phosphate is required as a cofactor.

It localises to the cytoplasm. The enzyme catalyses L-seryl-tRNA(Sec) + selenophosphate + H(+) = L-selenocysteinyl-tRNA(Sec) + phosphate. It participates in aminoacyl-tRNA biosynthesis; selenocysteinyl-tRNA(Sec) biosynthesis; selenocysteinyl-tRNA(Sec) from L-seryl-tRNA(Sec) (bacterial route): step 1/1. Converts seryl-tRNA(Sec) to selenocysteinyl-tRNA(Sec) required for selenoprotein biosynthesis. In Proteus mirabilis (strain HI4320), this protein is L-seryl-tRNA(Sec) selenium transferase.